The sequence spans 1861 residues: Protein TANC1 (1861 aa).

Methionine 1 carries the post-translational modification N-acetylmethionine. Disordered stretches follow at residues 1–46 (MLKA…SSLP), 63–99 (SLPS…ESPR), 206–225 (KSPC…KDSG), 257–311 (QKGV…MPRP), and 439–486 (QIAS…ISAE). Residues 8-21 (KSREGGKGGKKEAG) show a composition bias toward basic and acidic residues. A phosphoserine mark is found at serine 63, serine 66, serine 67, serine 207, and serine 270. A compositionally biased stretch (polar residues) spans 206 to 219 (KSPCETISSPSSTL). Polar residues predominate over residues 440 to 455 (IASNSPGSSPKTSDPT). Residues 461-480 (TPLLSPSSSTSASSTAKTPL) show a composition bias toward low complexity. Serine 465 carries the post-translational modification Phosphoserine. ANK repeat units follow at residues 896-928 (EGLS…NVNY), 934-963 (NNAP…CLDG), 967-996 (NGMT…RVDH), 1000-1029 (KGQC…SPGP), 1040-1069 (ALQQ…EHEV), 1078-1107 (WGET…AVSR), 1111-1140 (RGVP…DVNL), 1144-1173 (QGRT…ALSS), 1177-1206 (EGLS…AIDQ), 1210-1239 (NGRT…VIEH), and 1243-1272 (SGMR…KLGN). 3 TPR repeats span residues 1289–1322 (LQKL…FPRE), 1336–1369 (VSLY…KPKS), and 1371–1403 (EAFY…CPTN). Low complexity predominate over residues 1421–1431 (QRSQQQKQQGP). Disordered stretches follow at residues 1421-1485 (QRSQ…SVPS) and 1636-1696 (VAVD…KVQG). Serine 1439 carries the phosphoserine modification. Composition is skewed to low complexity over residues 1467 to 1485 (QEES…SVPS) and 1659 to 1689 (SLTS…SSFS). Residues serine 1668, serine 1676, and serine 1677 each carry the phosphoserine modification.

Belongs to the TANC family. In terms of assembly, interacts probably directly with DLG1, DLG4, HOMER1. Interacts with DLGAP1, INA, CAMK2A, GRIN2B and GRIA1. Interacts with TNIK. Interacts with MINK1. In terms of processing, phosphorylated; by MINK1 and TNIK upon stimulation by RAP2A.

The protein localises to the postsynaptic density. Its function is as follows. May be a scaffold component in the postsynaptic density. This chain is Protein TANC1 (TANC1), found in Homo sapiens (Human).